The primary structure comprises 356 residues: Methionine import ATP-binding protein MetN (356 aa).

The ABC transporter domain occupies isoleucine 7–isoleucine 250. Glycine 43–serine 50 serves as a coordination point for ATP.

The protein belongs to the ABC transporter superfamily. Methionine importer (TC 3.A.1.24) family. In terms of assembly, the complex is composed of two ATP-binding proteins (MetN), two transmembrane proteins (MetI) and a solute-binding protein (MetQ).

The protein localises to the cell membrane. It carries out the reaction L-methionine(out) + ATP + H2O = L-methionine(in) + ADP + phosphate + H(+). The enzyme catalyses D-methionine(out) + ATP + H2O = D-methionine(in) + ADP + phosphate + H(+). Its function is as follows. Part of the ABC transporter complex MetNIQ involved in methionine import. Responsible for energy coupling to the transport system. This Streptococcus agalactiae serotype III (strain NEM316) protein is Methionine import ATP-binding protein MetN.